The sequence spans 241 residues: Uridylate kinase (241 aa).

15 to 18 (KLSG) serves as a coordination point for ATP. Residues 23–28 (GAEGFG) are involved in allosteric activation by GTP. G57 provides a ligand contact to UMP. G58 and R62 together coordinate ATP. Residues D77 and 138–145 (TGNPFFTT) contribute to the UMP site. T165, Y171, and D174 together coordinate ATP.

Belongs to the UMP kinase family. As to quaternary structure, homohexamer.

It is found in the cytoplasm. It catalyses the reaction UMP + ATP = UDP + ADP. The protein operates within pyrimidine metabolism; CTP biosynthesis via de novo pathway; UDP from UMP (UMPK route): step 1/1. With respect to regulation, allosterically activated by GTP. Inhibited by UTP. Its function is as follows. Catalyzes the reversible phosphorylation of UMP to UDP. The sequence is that of Uridylate kinase from Yersinia pseudotuberculosis serotype O:1b (strain IP 31758).